A 213-amino-acid polypeptide reads, in one-letter code: Large ribosomal subunit protein uL23 (213 aa).

The segment at 1 to 117 is large ribosomal subunit protein uL23; it reads MNHNEIIKYP…KSTSELKLEE (117 aa). Residues 118–213 form a unknown region; sequence KIAAKIAAKE…TTKKTTTKKV (96 aa).

Belongs to the universal ribosomal protein uL23 family. In terms of assembly, part of the 50S ribosomal subunit. Contacts protein L29, and trigger factor when it is bound to the ribosome.

In terms of biological role, one of the early assembly proteins it binds 23S rRNA. One of the proteins that surrounds the polypeptide exit tunnel on the outside of the ribosome. Forms the main docking site for trigger factor binding to the ribosome. The chain is Large ribosomal subunit protein uL23 from Mycoplasma mobile (strain ATCC 43663 / 163K / NCTC 11711) (Mesomycoplasma mobile).